A 181-amino-acid polypeptide reads, in one-letter code: Adenylate kinase (181 aa).

An ATP-binding site is contributed by 10-15 (GAGKGT). The NMP stretch occupies residues 30-59 (STGELFRRNIEEGTKLGVEAKRYLDAGDLV). Residues threonine 31, arginine 36, 57 to 59 (DLV), 85 to 88 (GYPR), and glutamine 92 contribute to the AMP site. The tract at residues 126 to 132 (GRGRADD) is LID. Arginine 127 is a binding site for ATP. Positions 129 and 140 each coordinate AMP. Glycine 166 serves as a coordination point for ATP.

Belongs to the adenylate kinase family. As to quaternary structure, monomer.

The protein resides in the cytoplasm. The catalysed reaction is AMP + ATP = 2 ADP. It participates in purine metabolism; AMP biosynthesis via salvage pathway; AMP from ADP: step 1/1. Functionally, catalyzes the reversible transfer of the terminal phosphate group between ATP and AMP. Plays an important role in cellular energy homeostasis and in adenine nucleotide metabolism. The polypeptide is Adenylate kinase (Mycobacterium tuberculosis (strain ATCC 25177 / H37Ra)).